The primary structure comprises 507 residues: Probable Xaa-Pro aminopeptidase ARB_01886 (507 aa).

4 residues coordinate Mn(2+): Asp275, Asp286, Glu434, and Glu478.

The protein belongs to the peptidase M24B family. Requires Mn(2+) as cofactor.

The catalysed reaction is Release of any N-terminal amino acid, including proline, that is linked to proline, even from a dipeptide or tripeptide.. In terms of biological role, catalyzes the removal of a penultimate prolyl residue from the N-termini of peptides. This is Probable Xaa-Pro aminopeptidase ARB_01886 from Arthroderma benhamiae (strain ATCC MYA-4681 / CBS 112371) (Trichophyton mentagrophytes).